Consider the following 121-residue polypeptide: Holo-[acyl-carrier-protein] synthase (121 aa).

Asp-5 and Glu-50 together coordinate Mg(2+).

Belongs to the P-Pant transferase superfamily. AcpS family. Mg(2+) serves as cofactor.

The protein resides in the cytoplasm. It carries out the reaction apo-[ACP] + CoA = holo-[ACP] + adenosine 3',5'-bisphosphate + H(+). Its function is as follows. Transfers the 4'-phosphopantetheine moiety from coenzyme A to a Ser of acyl-carrier-protein. This Sulfurimonas denitrificans (strain ATCC 33889 / DSM 1251) (Thiomicrospira denitrificans (strain ATCC 33889 / DSM 1251)) protein is Holo-[acyl-carrier-protein] synthase.